The sequence spans 232 residues: Ribonuclease 3 (232 aa).

Residues Gln-5–Asp-134 form the RNase III domain. Glu-47 contacts Mg(2+). Asp-51 is an active-site residue. Residues Asp-120 and Glu-123 each contribute to the Mg(2+) site. Glu-123 is a catalytic residue. Positions Asp-160–Asp-229 constitute a DRBM domain.

Belongs to the ribonuclease III family. As to quaternary structure, homodimer. The cofactor is Mg(2+).

The protein localises to the cytoplasm. It carries out the reaction Endonucleolytic cleavage to 5'-phosphomonoester.. In terms of biological role, digests double-stranded RNA. Involved in the processing of primary rRNA transcript to yield the immediate precursors to the large and small rRNAs (23S and 16S). Processes some mRNAs, and tRNAs when they are encoded in the rRNA operon. Processes pre-crRNA and tracrRNA of type II CRISPR loci if present in the organism. The sequence is that of Ribonuclease 3 from Streptococcus pneumoniae (strain Taiwan19F-14).